Here is a 331-residue protein sequence, read N- to C-terminus: UPF0194 membrane protein YbhG (331 aa).

The signal sequence occupies residues 1-15 (MKKPVVIGLAVVVLA). Residues 107 to 208 (EEIAQAAAAV…LNLQDSTLIA (102 aa)) adopt a coiled-coil conformation.

Belongs to the UPF0194 family.

It is found in the periplasm. The protein is UPF0194 membrane protein YbhG of Escherichia coli O139:H28 (strain E24377A / ETEC).